Consider the following 526-residue polypeptide: Efflux pump aunC (526 aa).

The next 14 membrane-spanning stretches (helical) occupy residues 23–43, 64–84, 89–109, 125–145, 155–175, 183–203, 218–238, 254–274, 296–316, 339–359, 360–380, 386–406, 418–438, and 491–511; these read LCYK…CTSL, DVGW…LPFG, FFPI…GSFI, VAGL…TQCV, GFIM…GGAF, WCFY…FFTF, AAGL…CLLL, IIAL…LQLW, LYGF…PIWF, VIFA…GPFM, LLSA…HPSS, IGYQ…PVFV, TATA…VSVA, and VHTF…ATVI.

It belongs to the major facilitator superfamily. TCR/Tet family.

It is found in the cell membrane. Its function is as follows. Efflux pump; part of the gene cluster that mediates the biosynthesis of aurasperone B, a dimeric gamma-naphthopyrone. This chain is Efflux pump aunC, found in Aspergillus niger (strain ATCC 1015 / CBS 113.46 / FGSC A1144 / LSHB Ac4 / NCTC 3858a / NRRL 328 / USDA 3528.7).